The following is a 240-amino-acid chain: Pyridoxine 5'-phosphate synthase (240 aa).

Asn-7 provides a ligand contact to 3-amino-2-oxopropyl phosphate. Residue 9 to 10 (DH) participates in 1-deoxy-D-xylulose 5-phosphate binding. Arg-18 serves as a coordination point for 3-amino-2-oxopropyl phosphate. The active-site Proton acceptor is His-43. Positions 45 and 50 each coordinate 1-deoxy-D-xylulose 5-phosphate. Catalysis depends on Glu-70, which acts as the Proton acceptor. Thr-100 contributes to the 1-deoxy-D-xylulose 5-phosphate binding site. His-191 functions as the Proton donor in the catalytic mechanism. 3-amino-2-oxopropyl phosphate-binding positions include Gly-192 and 213–214 (GH).

The protein belongs to the PNP synthase family. Homooctamer; tetramer of dimers.

It localises to the cytoplasm. It carries out the reaction 3-amino-2-oxopropyl phosphate + 1-deoxy-D-xylulose 5-phosphate = pyridoxine 5'-phosphate + phosphate + 2 H2O + H(+). Its pathway is cofactor biosynthesis; pyridoxine 5'-phosphate biosynthesis; pyridoxine 5'-phosphate from D-erythrose 4-phosphate: step 5/5. Functionally, catalyzes the complicated ring closure reaction between the two acyclic compounds 1-deoxy-D-xylulose-5-phosphate (DXP) and 3-amino-2-oxopropyl phosphate (1-amino-acetone-3-phosphate or AAP) to form pyridoxine 5'-phosphate (PNP) and inorganic phosphate. In Gloeothece citriformis (strain PCC 7424) (Cyanothece sp. (strain PCC 7424)), this protein is Pyridoxine 5'-phosphate synthase.